Reading from the N-terminus, the 326-residue chain is Malate dehydrogenase (326 aa).

12–18 provides a ligand contact to NAD(+); that stretch reads GGTGQIA. Positions 93 and 99 each coordinate substrate. Residues N106, Q113, and 130 to 132 each bind NAD(+); that span reads VGN. Residues N132 and R163 each contribute to the substrate site. H188 functions as the Proton acceptor in the catalytic mechanism.

This sequence belongs to the LDH/MDH superfamily. MDH type 2 family.

It carries out the reaction (S)-malate + NAD(+) = oxaloacetate + NADH + H(+). In terms of biological role, catalyzes the reversible oxidation of malate to oxaloacetate. This chain is Malate dehydrogenase, found in Chlamydia trachomatis serovar L2 (strain ATCC VR-902B / DSM 19102 / 434/Bu).